The primary structure comprises 146 residues: Acidic phospholipase A2 S5-32M (146 aa).

The N-terminal stretch at 1–19 is a signal peptide; the sequence is MYPAHLLVLLAVCVSLLGA. Residues 20–27 constitute a propeptide that is removed on maturation; the sequence is ASIPPQPL. Intrachain disulfides connect Cys38/Cys98, Cys54/Cys145, Cys56/Cys72, Cys71/Cys126, Cys78/Cys119, Cys87/Cys112, and Cys105/Cys117. The Ca(2+) site is built by Tyr55, Gly57, and Gly59. His75 is a catalytic residue. Asp76 contributes to the Ca(2+) binding site. The active site involves Asp120.

The protein belongs to the phospholipase A2 family. Group I subfamily. D49 sub-subfamily. It depends on Ca(2+) as a cofactor. As to expression, expressed by the venom gland.

The protein localises to the secreted. It carries out the reaction a 1,2-diacyl-sn-glycero-3-phosphocholine + H2O = a 1-acyl-sn-glycero-3-phosphocholine + a fatty acid + H(+). Its function is as follows. Snake venom phospholipase A2 (PLA2) that inhibits collagen-induced platelet aggregation. PLA2 catalyzes the calcium-dependent hydrolysis of the 2-acyl groups in 3-sn-phosphoglycerides. This is Acidic phospholipase A2 S5-32M from Austrelaps superbus (Lowland copperhead snake).